The sequence spans 221 residues: Very-long-chain (3R)-3-hydroxyacyl-CoA dehydratase PASTICCINO 2A (221 aa).

Topologically, residues 1–11 (MAGVGSAVRRL) are cytoplasmic. Residues 12–32 (YLSVYNWAVFFGWAQVLYYAV) traverse the membrane as a helical segment. Over 33-51 (TTLLESGHEAVYAAVERPL) the chain is Lumenal. A helical membrane pass occupies residues 52–70 (QFAQTAAFLEILHGLVGLV). Residues 71 to 76 (RSPVSA) are Cytoplasmic-facing. A helical transmembrane segment spans residues 77-95 (TLPQIGSRLFLTWGILWSF). Residues 96-100 (PETHS) lie on the Lumenal side of the membrane. A helical membrane pass occupies residues 101 to 121 (HILVTSLVISWSITEIIRYSF). At 122–141 (FGMKEAFGFAPSWLLWLRYS) the chain is on the cytoplasmic side. The helical transmembrane segment at 142 to 165 (TFMVLYPTGISSEVGLIYIALPYM) threads the bilayer. Catalysis depends on residues Tyr-147 and Glu-154. The Lumenal portion of the chain corresponds to 166–184 (KASEKYCLRMPNKWNFSFD). The helical transmembrane segment at 185 to 209 (FFYASILSLAIYVPGSPHMFTYMLA) threads the bilayer. At 210–221 (QRKKALAKAKAA) the chain is on the cytoplasmic side.

Belongs to the very long-chain fatty acids dehydratase HACD family.

The protein resides in the endoplasmic reticulum membrane. The enzyme catalyses a very-long-chain (3R)-3-hydroxyacyl-CoA = a very-long-chain (2E)-enoyl-CoA + H2O. It participates in lipid metabolism; fatty acid biosynthesis. Catalyzes the third of the four reactions of the long-chain fatty acids elongation cycle. This endoplasmic reticulum-bound enzymatic process, allows the addition of two carbons to the chain of long- and very long-chain fatty acids/VLCFAs per cycle. This enzyme catalyzes the dehydration of the 3-hydroxyacyl-CoA intermediate into trans-2,3-enoyl-CoA, within each cycle of fatty acid elongation. Thereby, it participates in the production of VLCFAs of different chain lengths that are involved in multiple biological processes as precursors of membrane lipids and lipid mediators. May be an anti-phosphatase that prevents CDKA-1 dephosphorylation and activation. Involved in the hormonal control of cell division and differentiation. Required for proliferation control of meristematic and non-meristematic cells. Negative regulator of the cell cycle. In Oryza sativa subsp. japonica (Rice), this protein is Very-long-chain (3R)-3-hydroxyacyl-CoA dehydratase PASTICCINO 2A (PAS2A).